The sequence spans 501 residues: V-type proton ATPase subunit B 2 (501 aa).

R392 contacts ATP.

This sequence belongs to the ATPase alpha/beta chains family. As to quaternary structure, V-ATPase is a heteromultimeric enzyme made up of two complexes: the ATP-hydrolytic V1 complex and the proton translocation V0 complex. The V1 complex consists of three catalytic AB heterodimers that form a heterohexamer, three peripheral stalks each consisting of EG heterodimers, one central rotor including subunits D and F, and the regulatory subunits C and H. The proton translocation complex V0 consists of the proton transport subunit a, a ring of proteolipid subunits c9c'', rotary subunit d, subunits e and f, and the accessory subunits vah-19/Ac45 and vah-20/PRR. Predominantly expressed in male and hermaphrodite testis (at protein level).

The protein localises to the cytoplasm. In terms of biological role, non-catalytic subunit of the V1 complex of vacuolar(H+)-ATPase (V-ATPase), a multisubunit enzyme composed of a peripheral complex (V1) that hydrolyzes ATP and a membrane integral complex (V0) that translocates protons. V-ATPase is responsible for acidifying and maintaining the pH of intracellular compartments and in some cell types, is targeted to the plasma membrane, where it is responsible for acidifying the extracellular environment. In neurons, required for necrotic cell death probably by promoting intracellular acidification. Required for spermatogenesis where it regulates the fibrous body-membranous organelle (FBMO) morphology in spermatocytes and the acidification of FBMO-derived secretory membranous organelles (MOs) as spermatids mature. This chain is V-type proton ATPase subunit B 2, found in Caenorhabditis elegans.